Reading from the N-terminus, the 294-residue chain is Glycine--tRNA ligase alpha subunit (294 aa).

This sequence belongs to the class-II aminoacyl-tRNA synthetase family. As to quaternary structure, tetramer of two alpha and two beta subunits.

The protein localises to the cytoplasm. The enzyme catalyses tRNA(Gly) + glycine + ATP = glycyl-tRNA(Gly) + AMP + diphosphate. The protein is Glycine--tRNA ligase alpha subunit of Trichodesmium erythraeum (strain IMS101).